The sequence spans 153 residues: ATP synthase subunit b' (153 aa).

The chain crosses the membrane as a helical span at residues 20–40 (TLPLMAVQVVLLTFILNALFF).

The protein belongs to the ATPase B chain family. In terms of assembly, F-type ATPases have 2 components, F(1) - the catalytic core - and F(0) - the membrane proton channel. F(1) has five subunits: alpha(3), beta(3), gamma(1), delta(1), epsilon(1). F(0) has four main subunits: a(1), b(1), b'(1) and c(10-14). The alpha and beta chains form an alternating ring which encloses part of the gamma chain. F(1) is attached to F(0) by a central stalk formed by the gamma and epsilon chains, while a peripheral stalk is formed by the delta, b and b' chains.

The protein resides in the cellular thylakoid membrane. Its function is as follows. F(1)F(0) ATP synthase produces ATP from ADP in the presence of a proton or sodium gradient. F-type ATPases consist of two structural domains, F(1) containing the extramembraneous catalytic core and F(0) containing the membrane proton channel, linked together by a central stalk and a peripheral stalk. During catalysis, ATP synthesis in the catalytic domain of F(1) is coupled via a rotary mechanism of the central stalk subunits to proton translocation. In terms of biological role, component of the F(0) channel, it forms part of the peripheral stalk, linking F(1) to F(0). The b'-subunit is a diverged and duplicated form of b found in plants and photosynthetic bacteria. This chain is ATP synthase subunit b', found in Prochlorococcus marinus (strain NATL2A).